The primary structure comprises 319 residues: N-acetylneuraminate lyase (319 aa).

Positions 51 and 52 each coordinate aceneuramate. Tyr143 functions as the Proton donor in the catalytic mechanism. Lys173 (schiff-base intermediate with substrate) is an active-site residue. Aceneuramate-binding residues include Ser175, Gly199, Asp201, Glu202, and Ser218.

The protein belongs to the DapA family. NanA subfamily. As to quaternary structure, homotetramer.

Its subcellular location is the cytoplasm. It carries out the reaction aceneuramate = aldehydo-N-acetyl-D-mannosamine + pyruvate. Its pathway is amino-sugar metabolism; N-acetylneuraminate degradation. In terms of biological role, catalyzes the cleavage of N-acetylneuraminic acid (sialic acid) to form pyruvate and N-acetylmannosamine via a Schiff base intermediate. It prevents sialic acids from being recycled and returning to the cell surface. Involved in the N-glycolylneuraminic acid (Neu5Gc) degradation pathway. The polypeptide is N-acetylneuraminate lyase (Sus scrofa (Pig)).